Here is a 235-residue protein sequence, read N- to C-terminus: MRLAVNIDHIATLRNARNEHNPDPVEAALLAEKSGAVGIVCHLREDRRHIRDHDLAALRKAVTTKLDLEMAMTDEMGAIAVATMPELITLVPEKREELTTEGGFAIERHFNRLVDFLEPIKGAGIEISLFIEAEQRAIDLAEKAGADLVELHTGAYALKTGEEQAIELKKIRQAAVYAKSLGLRVVAGHGLNYENIAPFRDIEEIEEVSIGHALIARAAFVGIPAAVREMLDIIN.

Asn-6 lines the 3-amino-2-oxopropyl phosphate pocket. 8-9 (DH) contributes to the 1-deoxy-D-xylulose 5-phosphate binding site. Residue Arg-17 participates in 3-amino-2-oxopropyl phosphate binding. Residue His-42 is the Proton acceptor of the active site. 1-deoxy-D-xylulose 5-phosphate-binding residues include Arg-44 and His-49. Residue Glu-69 is the Proton acceptor of the active site. Thr-99 serves as a coordination point for 1-deoxy-D-xylulose 5-phosphate. The active-site Proton donor is His-189. 3-amino-2-oxopropyl phosphate contacts are provided by residues Gly-190 and 211–212 (GH).

Belongs to the PNP synthase family. In terms of assembly, homooctamer; tetramer of dimers.

It localises to the cytoplasm. It carries out the reaction 3-amino-2-oxopropyl phosphate + 1-deoxy-D-xylulose 5-phosphate = pyridoxine 5'-phosphate + phosphate + 2 H2O + H(+). It participates in cofactor biosynthesis; pyridoxine 5'-phosphate biosynthesis; pyridoxine 5'-phosphate from D-erythrose 4-phosphate: step 5/5. Its function is as follows. Catalyzes the complicated ring closure reaction between the two acyclic compounds 1-deoxy-D-xylulose-5-phosphate (DXP) and 3-amino-2-oxopropyl phosphate (1-amino-acetone-3-phosphate or AAP) to form pyridoxine 5'-phosphate (PNP) and inorganic phosphate. This is Pyridoxine 5'-phosphate synthase from Chlorobium phaeovibrioides (strain DSM 265 / 1930) (Prosthecochloris vibrioformis (strain DSM 265)).